The primary structure comprises 1235 residues: ATP-dependent helicase/nuclease subunit A (1235 aa).

Residues 12 to 482 form the UvrD-like helicase ATP-binding domain; that stretch reads SLWTDDQWKA…IDLSQNFRSR (471 aa). Residue 33 to 40 participates in ATP binding; that stretch reads AAAGSGKT. A UvrD-like helicase C-terminal domain is found at 509–800; it reads AAELTLGAKS…RMMTIHASKG (292 aa).

Belongs to the helicase family. AddA subfamily. Heterodimer of AddA and AddB/RexB. Mg(2+) serves as cofactor.

It carries out the reaction Couples ATP hydrolysis with the unwinding of duplex DNA by translocating in the 3'-5' direction.. The enzyme catalyses ATP + H2O = ADP + phosphate + H(+). Its function is as follows. The heterodimer acts as both an ATP-dependent DNA helicase and an ATP-dependent, dual-direction single-stranded exonuclease. Recognizes the chi site generating a DNA molecule suitable for the initiation of homologous recombination. The AddA nuclease domain is required for chi fragment generation; this subunit has the helicase and 3' -&gt; 5' nuclease activities. The protein is ATP-dependent helicase/nuclease subunit A of Listeria monocytogenes serotype 4a (strain HCC23).